The sequence spans 189 residues: Interferon alpha-H (189 aa).

Residues 1-23 (MAPAWSFLLALLLLSCNAICSLG) form the signal peptide. 2 disulfides stabilise this stretch: Cys24-Cys122 and Cys52-Cys162.

It belongs to the alpha/beta interferon family.

The protein localises to the secreted. Functionally, produced by macrophages, IFN-alpha have antiviral activities. Interferon stimulates the production of two enzymes: a protein kinase and an oligoadenylate synthetase. The protein is Interferon alpha-H (IFNAH) of Bos taurus (Bovine).